The following is a 269-amino-acid chain: Uncharacterised methyltransferase MT1546 (269 aa).

This sequence belongs to the methyltransferase superfamily.

In Mycobacterium tuberculosis (strain CDC 1551 / Oshkosh), this protein is Uncharacterised methyltransferase MT1546.